Here is a 527-residue protein sequence, read N- to C-terminus: Glutamate--cysteine ligase (527 aa).

This sequence belongs to the glutamate--cysteine ligase type 1 family. Type 1 subfamily.

The catalysed reaction is L-cysteine + L-glutamate + ATP = gamma-L-glutamyl-L-cysteine + ADP + phosphate + H(+). Its pathway is sulfur metabolism; glutathione biosynthesis; glutathione from L-cysteine and L-glutamate: step 1/2. This is Glutamate--cysteine ligase from Bordetella petrii (strain ATCC BAA-461 / DSM 12804 / CCUG 43448).